Here is a 285-residue protein sequence, read N- to C-terminus: Phosphoribosylaminoimidazole-succinocarboxamide synthase (285 aa).

Belongs to the SAICAR synthetase family.

It catalyses the reaction 5-amino-1-(5-phospho-D-ribosyl)imidazole-4-carboxylate + L-aspartate + ATP = (2S)-2-[5-amino-1-(5-phospho-beta-D-ribosyl)imidazole-4-carboxamido]succinate + ADP + phosphate + 2 H(+). The protein operates within purine metabolism; IMP biosynthesis via de novo pathway; 5-amino-1-(5-phospho-D-ribosyl)imidazole-4-carboxamide from 5-amino-1-(5-phospho-D-ribosyl)imidazole-4-carboxylate: step 1/2. The chain is Phosphoribosylaminoimidazole-succinocarboxamide synthase from Leptospira interrogans serogroup Icterohaemorrhagiae serovar copenhageni (strain Fiocruz L1-130).